Reading from the N-terminus, the 384-residue chain is Formate-dependent phosphoribosylglycinamide formyltransferase (384 aa).

N(1)-(5-phospho-beta-D-ribosyl)glycinamide-binding positions include 14 to 15 and Glu-74; that span reads EL. ATP-binding positions include Arg-106, Lys-147, 152-157, 187-190, and Glu-195; these read SSGKGQ and EEFI. One can recognise an ATP-grasp domain in the interval 111–300; that stretch reads RLAAETLGLA…EFALHVRAIL (190 aa). Positions 259 and 271 each coordinate Mg(2+). N(1)-(5-phospho-beta-D-ribosyl)glycinamide contacts are provided by residues Asp-278, Lys-348, and 355–356; that span reads RR.

Belongs to the PurK/PurT family. Homodimer.

The enzyme catalyses N(1)-(5-phospho-beta-D-ribosyl)glycinamide + formate + ATP = N(2)-formyl-N(1)-(5-phospho-beta-D-ribosyl)glycinamide + ADP + phosphate + H(+). It participates in purine metabolism; IMP biosynthesis via de novo pathway; N(2)-formyl-N(1)-(5-phospho-D-ribosyl)glycinamide from N(1)-(5-phospho-D-ribosyl)glycinamide (formate route): step 1/1. Functionally, catalyzes two reactions: the first one is the production of beta-formyl glycinamide ribonucleotide (GAR) from formate, ATP and beta GAR; the second, a side reaction, is the production of acetyl phosphate and ADP from acetate and ATP. In terms of biological role, involved in the de novo purine biosynthesis. Catalyzes the transfer of formate to 5-phospho-ribosyl-glycinamide (GAR), producing 5-phospho-ribosyl-N-formylglycinamide (FGAR). Formate is provided by PurU via hydrolysis of 10-formyl-tetrahydrofolate. This Bacillus subtilis (strain 168) protein is Formate-dependent phosphoribosylglycinamide formyltransferase.